A 191-amino-acid chain; its full sequence is Imidazoleglycerol-phosphate dehydratase (191 aa).

The protein belongs to the imidazoleglycerol-phosphate dehydratase family.

The protein resides in the cytoplasm. The enzyme catalyses D-erythro-1-(imidazol-4-yl)glycerol 3-phosphate = 3-(imidazol-4-yl)-2-oxopropyl phosphate + H2O. It participates in amino-acid biosynthesis; L-histidine biosynthesis; L-histidine from 5-phospho-alpha-D-ribose 1-diphosphate: step 6/9. The sequence is that of Imidazoleglycerol-phosphate dehydratase from Methanosarcina mazei (strain ATCC BAA-159 / DSM 3647 / Goe1 / Go1 / JCM 11833 / OCM 88) (Methanosarcina frisia).